Consider the following 447-residue polypeptide: Folate synthesis bifunctional protein (447 aa).

The HPPK stretch occupies residues 1–165; the sequence is MTTAQFICLS…SFGEIAHLLP (165 aa). Residues 179–438 form the Pterin-binding domain; that stretch reads TLLMGVVNVT…DVEANQRVLS (260 aa). The DHPS stretch occupies residues 181–447; that stretch reads LMGVVNVTDN…SAAAWSGVHV (267 aa). Position 186 (N186) interacts with Mg(2+). Residues T226, D266, N286, D356, K392, and 426–428 contribute to the (7,8-dihydropterin-6-yl)methyl diphosphate site; that span reads RVH.

In the C-terminal section; belongs to the DHPS family. The protein in the N-terminal section; belongs to the HPPK family. Requires Mg(2+) as cofactor.

It carries out the reaction 6-hydroxymethyl-7,8-dihydropterin + ATP = (7,8-dihydropterin-6-yl)methyl diphosphate + AMP + H(+). It catalyses the reaction (7,8-dihydropterin-6-yl)methyl diphosphate + 4-aminobenzoate = 7,8-dihydropteroate + diphosphate. Its pathway is cofactor biosynthesis; tetrahydrofolate biosynthesis; 2-amino-4-hydroxy-6-hydroxymethyl-7,8-dihydropteridine diphosphate from 7,8-dihydroneopterin triphosphate: step 4/4. It functions in the pathway cofactor biosynthesis; tetrahydrofolate biosynthesis; 7,8-dihydrofolate from 2-amino-4-hydroxy-6-hydroxymethyl-7,8-dihydropteridine diphosphate and 4-aminobenzoate: step 1/2. This chain is Folate synthesis bifunctional protein (folKP), found in Chlamydia caviae (strain ATCC VR-813 / DSM 19441 / 03DC25 / GPIC) (Chlamydophila caviae).